A 428-amino-acid polypeptide reads, in one-letter code: Dihydroorotase (428 aa).

The Zn(2+) site is built by His-59 and His-61. Substrate contacts are provided by residues 61-63 and Asn-93; that span reads HLR. Asp-151, His-178, and His-231 together coordinate Zn(2+). Asn-277 provides a ligand contact to substrate. Asp-304 contributes to the Zn(2+) binding site. Residue Asp-304 is part of the active site. Residues His-308 and 322–323 contribute to the substrate site; that span reads FG.

This sequence belongs to the metallo-dependent hydrolases superfamily. DHOase family. Class I DHOase subfamily. It depends on Zn(2+) as a cofactor.

The catalysed reaction is (S)-dihydroorotate + H2O = N-carbamoyl-L-aspartate + H(+). Its pathway is pyrimidine metabolism; UMP biosynthesis via de novo pathway; (S)-dihydroorotate from bicarbonate: step 3/3. Catalyzes the reversible cyclization of carbamoyl aspartate to dihydroorotate. The chain is Dihydroorotase from Bacillus cereus (strain AH187).